The sequence spans 475 residues: Aspartyl/glutamyl-tRNA(Asn/Gln) amidotransferase subunit B (475 aa).

This sequence belongs to the GatB/GatE family. GatB subfamily. In terms of assembly, heterotrimer of A, B and C subunits.

It catalyses the reaction L-glutamyl-tRNA(Gln) + L-glutamine + ATP + H2O = L-glutaminyl-tRNA(Gln) + L-glutamate + ADP + phosphate + H(+). It carries out the reaction L-aspartyl-tRNA(Asn) + L-glutamine + ATP + H2O = L-asparaginyl-tRNA(Asn) + L-glutamate + ADP + phosphate + 2 H(+). Functionally, allows the formation of correctly charged Asn-tRNA(Asn) or Gln-tRNA(Gln) through the transamidation of misacylated Asp-tRNA(Asn) or Glu-tRNA(Gln) in organisms which lack either or both of asparaginyl-tRNA or glutaminyl-tRNA synthetases. The reaction takes place in the presence of glutamine and ATP through an activated phospho-Asp-tRNA(Asn) or phospho-Glu-tRNA(Gln). This Caldanaerobacter subterraneus subsp. tengcongensis (strain DSM 15242 / JCM 11007 / NBRC 100824 / MB4) (Thermoanaerobacter tengcongensis) protein is Aspartyl/glutamyl-tRNA(Asn/Gln) amidotransferase subunit B.